The primary structure comprises 272 residues: S-adenosylmethionine decarboxylase proenzyme (272 aa).

The active-site Schiff-base intermediate with substrate; via pyruvic acid is S122. Position 122 is a pyruvic acid (Ser); by autocatalysis (S122). The active-site Proton acceptor; for processing activity is the H127. Catalysis depends on C150, which acts as the Proton donor; for catalytic activity.

Belongs to the prokaryotic AdoMetDC family. Type 2 subfamily. In terms of assembly, heterooctamer of four alpha and four beta chains arranged as a tetramer of alpha/beta heterodimers. The cofactor is pyruvate. Post-translationally, is synthesized initially as an inactive proenzyme. Formation of the active enzyme involves a self-maturation process in which the active site pyruvoyl group is generated from an internal serine residue via an autocatalytic post-translational modification. Two non-identical subunits are generated from the proenzyme in this reaction, and the pyruvate is formed at the N-terminus of the alpha chain, which is derived from the carboxyl end of the proenzyme. The post-translation cleavage follows an unusual pathway, termed non-hydrolytic serinolysis, in which the side chain hydroxyl group of the serine supplies its oxygen atom to form the C-terminus of the beta chain, while the remainder of the serine residue undergoes an oxidative deamination to produce ammonia and the pyruvoyl group blocking the N-terminus of the alpha chain.

It carries out the reaction S-adenosyl-L-methionine + H(+) = S-adenosyl 3-(methylsulfanyl)propylamine + CO2. It functions in the pathway amine and polyamine biosynthesis; S-adenosylmethioninamine biosynthesis; S-adenosylmethioninamine from S-adenosyl-L-methionine: step 1/1. In terms of biological role, catalyzes the decarboxylation of S-adenosylmethionine to S-adenosylmethioninamine (dcAdoMet), the propylamine donor required for the synthesis of the polyamines spermine and spermidine from the diamine putrescine. The polypeptide is S-adenosylmethionine decarboxylase proenzyme (Clostridium botulinum (strain Alaska E43 / Type E3)).